A 147-amino-acid chain; its full sequence is Large ribosomal subunit protein uL13 (147 aa).

It belongs to the universal ribosomal protein uL13 family. Part of the 50S ribosomal subunit.

This protein is one of the early assembly proteins of the 50S ribosomal subunit, although it is not seen to bind rRNA by itself. It is important during the early stages of 50S assembly. This Kocuria rhizophila (strain ATCC 9341 / DSM 348 / NBRC 103217 / DC2201) protein is Large ribosomal subunit protein uL13.